The following is a 945-amino-acid chain: MSTPSIPQFTSPFSPFSSGSHSTGMAPSQTVGLDTLAEGSQYVLEQLQLSRDAAGSGAGDGAPSTSLRNSMSHTKDQPPFDNEKNQSTGSGFRDALQRDPLVEARSAIRKTSSSAPVRRRISRACDQCNQLRTKCDGQHPCAHCIEFGLTCEYARERKKRGKASKKDLAAAAAAATQGSNGHSGQANASLMGERTSEDSRPGQDVNGTYDSAFESHHLSSQPSHMQHASTAGISGLHESQTAPSHSQPSLGTTIDAMHLNHFNTMNDSGRPAMSISDLRSLPPSVLPPQGLSSGYNASAFALVNPQEPGSPANQFRLGSSAENPTAPFLGLSPPGQSPGWLPLPSPSPANFPSFSLHPFSSTLRYPVLQPVLPHIASIIPQSLACDLLDVYFTSSSSSHLSPLSPYVVGYIFRKQSFLHPTKPRICSPGLLASMLWVAAQTSEAAFLTSPPSARGRVCQKLLELTIGLLRPLVHGPATGEASPNYAANMVINGVALGGFGVSMDQLGAQSSATGAVDDVATYVHLATVVSASEYKAASMRWWTAAWSLARELKLGRELPPNVSHARQDGERDGDGEADKRHPPTLITSLGHGSGSSGINVTEEEREERRRLWWLLYATDRHLALCYNRPLTLLDKECGGLLQPMNDDLWQVGDFAAAAYRQVGPPVECTGHSMYGYFLPLMTILGGIVDLHHAENHPRFGLAFRNSPEWERQVLDVTRQLDTYGRSLKEFEARYTSNLTLGATDNEPVVEGAHLDHTSPSGRSSSTVGSRVSESIVHTRMVVAYGTHIMHVLHILLAGKWDPVNLLEDHDLWISSESFVSAMSHAVGAAEAAAEILEYDPDLSFMPFFFGIYLLQGSFLLLLAADKLQGDASPSVVRACETIVRAHEACVVTLNTEYQRTFRKVMRSALAQVRGRIPEDFGEQQQRRREVLALYRWSGDGSGLAL.

The span at 1–23 shows a compositional bias: low complexity; that stretch reads MSTPSIPQFTSPFSPFSSGSHST. Disordered regions lie at residues 1-33 and 52-93; these read MSTP…TVGL and DAAG…SGFR. Over residues 63–72 the composition is skewed to polar residues; that stretch reads PSTSLRNSMS. Over residues 73–84 the composition is skewed to basic and acidic residues; it reads HTKDQPPFDNEK. Residues 125 to 151 constitute a DNA-binding region (zn(2)-C6 fungal-type); it reads CDQCNQLRTKCDGQHPCAHCIEFGLTC. 2 disordered regions span residues 172 to 210 and 559 to 601; these read AAAA…GTYD and PPNV…INVT. Polar residues predominate over residues 176–188; that stretch reads TQGSNGHSGQANA. Residues 565 to 581 show a composition bias toward basic and acidic residues; the sequence is ARQDGERDGDGEADKRH.

This sequence belongs to the xlnR/xlr1 family.

Its subcellular location is the nucleus. In terms of biological role, transcriptional activator of the xylanolytic system. Involved in the regulation of extracellular cellulolytic and xylanolytic genes and in the regulation of the intracellular activities of D-xylose catabolic genes in the pentose catabolic pathway (PCP) in response to the presence of D-xylose. Binds to the DNA sequence 5'-GGCTAAA-3'. The polypeptide is Xylanolytic transcriptional activator xlnR (xlnR) (Aspergillus niger (strain ATCC MYA-4892 / CBS 513.88 / FGSC A1513)).